A 375-amino-acid chain; its full sequence is 23S rRNA (uracil(747)-C(5))-methyltransferase RlmC (375 aa).

The [4Fe-4S] cluster site is built by Cys-3, Cys-11, Cys-14, and Cys-87. Residues Gln-212, Phe-241, Glu-262, and Asn-307 each coordinate S-adenosyl-L-methionine. Residue Cys-334 is the Nucleophile of the active site.

This sequence belongs to the class I-like SAM-binding methyltransferase superfamily. RNA M5U methyltransferase family. RlmC subfamily.

The enzyme catalyses uridine(747) in 23S rRNA + S-adenosyl-L-methionine = 5-methyluridine(747) in 23S rRNA + S-adenosyl-L-homocysteine + H(+). Catalyzes the formation of 5-methyl-uridine at position 747 (m5U747) in 23S rRNA. In Escherichia coli O7:K1 (strain IAI39 / ExPEC), this protein is 23S rRNA (uracil(747)-C(5))-methyltransferase RlmC.